Consider the following 293-residue polypeptide: Phosphate import ATP-binding protein PstB (293 aa).

The region spanning 46 to 288 (MTCRKVDVHY…PGHQLTEDYI (243 aa)) is the ABC transporter domain. Residue 78-85 (GPSGCGKS) participates in ATP binding.

It belongs to the ABC transporter superfamily. Phosphate importer (TC 3.A.1.7) family. The complex is composed of two ATP-binding proteins (PstB), two transmembrane proteins (PstC and PstA) and a solute-binding protein (PstS).

Its subcellular location is the cell inner membrane. It catalyses the reaction phosphate(out) + ATP + H2O = ADP + 2 phosphate(in) + H(+). Functionally, part of the ABC transporter complex PstSACB involved in phosphate import. Responsible for energy coupling to the transport system. This is Phosphate import ATP-binding protein PstB from Desulfotalea psychrophila (strain LSv54 / DSM 12343).